Here is a 428-residue protein sequence, read N- to C-terminus: Cyclic AMP-responsive element-binding protein 3-like protein 4 (428 aa).

Positions 1 to 68 are required for transcriptional activation; it reads MLLGSLFEQT…EFLQMMINPN (68 aa). Over 1 to 294 the chain is Cytoplasmic; the sequence is MLLGSLFEQT…QTSNKAAQTS (294 aa). The tract at residues 71–111 is disordered; sequence YSTGPAAAESPESDSGFSDDPRPDTPPQSETSPPLPQPTPV. A bZIP domain is found at 216–279; sequence ILKKVRRKIR…ISLITQLRKL (64 aa). Positions 218 to 247 are basic motif; that stretch reads KKVRRKIRNKQSAQDSRRRKKEYIDGLESR. The leucine-zipper stretch occupies residues 258-279; that stretch reads LHKKVVELEKHNISLITQLRKL. The helical; Signal-anchor for type II membrane protein transmembrane segment at 295-315 threads the bilayer; that stretch reads TCVLILLFSLALLVFPSYSPF. Residues 316-428 are Lumenal-facing; the sequence is RSRPSASQED…LSKTARADEM (113 aa). Residues 339 to 428 form a disordered region; it reads NKGGFSEVAD…LSKTARADEM (90 aa). The segment covering 354–368 has biased composition (basic and acidic residues); that stretch reads TLHRAQQREEGDPGR. An N-linked (GlcNAc...) asparagine glycan is attached at Asn418.

It belongs to the bZIP family. ATF subfamily. In terms of assembly, binds DNA as a dimer. In terms of processing, controlled by regulated intramembrane proteolysis (RIP). A fragment containing the cytoplasmic transcription factor domain is released by proteolysis. The cleavage seems to be performed sequentially by site-1 and site-2 proteases (PS1 and PS2).

Its subcellular location is the endoplasmic reticulum membrane. The protein localises to the nucleus. Functionally, transcriptional activator. This chain is Cyclic AMP-responsive element-binding protein 3-like protein 4 (creb3l4), found in Xenopus tropicalis (Western clawed frog).